A 519-amino-acid polypeptide reads, in one-letter code: Tetratricopeptide repeat protein 31 (519 aa).

Positions 147 to 197 (QKLLVTEEEANRLAEELVAEEERMKQKAEKKRLKKKRQKERKRQERLEQYC) form a coiled coil. Positions 175 to 187 (EKKRLKKKRQKER) are enriched in basic residues. 2 disordered regions span residues 175 to 230 (EKKR…EEDS) and 253 to 294 (RREK…VQAS). Position 278 is a phosphoserine (serine 278). 3 TPR repeats span residues 305–338 (SQEL…NPQD), 339–372 (HRLF…RPGW), and 373–406 (PRGL…GSQP). A disordered region spans residues 474–506 (PSCHRSHPNQPLSQTQSRRPHPLKPQDPSKGWD). Polar residues predominate over residues 481-490 (PNQPLSQTQS).

In Homo sapiens (Human), this protein is Tetratricopeptide repeat protein 31 (TTC31).